A 311-amino-acid chain; its full sequence is Methionyl-tRNA formyltransferase (311 aa).

Position 109–112 (109–112 (SLLP)) interacts with (6S)-5,6,7,8-tetrahydrofolate.

Belongs to the Fmt family.

It catalyses the reaction L-methionyl-tRNA(fMet) + (6R)-10-formyltetrahydrofolate = N-formyl-L-methionyl-tRNA(fMet) + (6S)-5,6,7,8-tetrahydrofolate + H(+). Functionally, attaches a formyl group to the free amino group of methionyl-tRNA(fMet). The formyl group appears to play a dual role in the initiator identity of N-formylmethionyl-tRNA by promoting its recognition by IF2 and preventing the misappropriation of this tRNA by the elongation apparatus. This chain is Methionyl-tRNA formyltransferase, found in Moorella thermoacetica (strain ATCC 39073 / JCM 9320).